We begin with the raw amino-acid sequence, 158 residues long: RNA pyrophosphohydrolase (158 aa).

A Nudix hydrolase domain is found at 6 to 149 (GYRLNVGIVL…KRHVYRKVMK (144 aa)). The Nudix box motif lies at 38–59 (GGINIGETPEQAMYRELFEEIG).

The protein belongs to the Nudix hydrolase family. RppH subfamily. It depends on a divalent metal cation as a cofactor.

Its function is as follows. Accelerates the degradation of transcripts by removing pyrophosphate from the 5'-end of triphosphorylated RNA, leading to a more labile monophosphorylated state that can stimulate subsequent ribonuclease cleavage. The polypeptide is RNA pyrophosphohydrolase (Blochmanniella floridana).